A 361-amino-acid chain; its full sequence is Hydroxycarboxylate dehydrogenase B (361 aa).

NAD(+) contacts are provided by residues H48, 122–124 (GRI), 178–182 (LLDYA), H234, N270, and 313–316 (GEWE).

It belongs to the LDH2/MDH2 oxidoreductase family.

It catalyses the reaction 2-hydroxyglutarate + NADP(+) = 2-oxoglutarate + NADPH + H(+). The enzyme catalyses 2-hydroxyglutarate + NAD(+) = 2-oxoglutarate + NADH + H(+). It carries out the reaction 3-phenyllactate + NADP(+) = 3-phenylpyruvate + NADPH + H(+). The catalysed reaction is 3-phenyllactate + NAD(+) = 3-phenylpyruvate + NADH + H(+). It catalyses the reaction (2R)-2-hydroxy-3-(4-hydroxyphenyl)propanoate + NAD(+) = 3-(4-hydroxyphenyl)pyruvate + NADH + H(+). The enzyme catalyses (2R)-2-hydroxy-3-(4-hydroxyphenyl)propanoate + NADP(+) = 3-(4-hydroxyphenyl)pyruvate + NADPH + H(+). It carries out the reaction (2R)-3-(3,4-dihydroxyphenyl)lactate + NADP(+) = 3-(3,4-dihydroxyphenyl)pyruvate + NADPH + H(+). The catalysed reaction is (2R)-3-(3,4-dihydroxyphenyl)lactate + NAD(+) = 3-(3,4-dihydroxyphenyl)pyruvate + NADH + H(+). Functionally, catalyzes the NAD(P)H-dependent reduction of 2-oxoglutarate, phenylpyruvate and (4-hydroxyphenyl)pyruvate, leading to the respective 2-hydroxycarboxylate in vitro. Shows a preference for NADPH over NADH as a redox partner. Do not catalyze the reverse reactions. The chain is Hydroxycarboxylate dehydrogenase B from Escherichia coli (strain K12).